The sequence spans 419 residues: Serine--tRNA ligase (419 aa).

Residues 45–66 form a disordered region; the sequence is ADSLRAEQKAASKSVGGASPEE. 226–228 is a binding site for L-serine; it reads TSE. Residues 257-259 and valine 273 each bind ATP; that span reads RRE. Glutamate 280 contributes to the L-serine binding site. 344–347 contacts ATP; that stretch reads ELTS. Residue threonine 379 participates in L-serine binding.

This sequence belongs to the class-II aminoacyl-tRNA synthetase family. Type-1 seryl-tRNA synthetase subfamily. Homodimer. The tRNA molecule binds across the dimer.

It is found in the cytoplasm. The catalysed reaction is tRNA(Ser) + L-serine + ATP = L-seryl-tRNA(Ser) + AMP + diphosphate + H(+). It catalyses the reaction tRNA(Sec) + L-serine + ATP = L-seryl-tRNA(Sec) + AMP + diphosphate + H(+). The protein operates within aminoacyl-tRNA biosynthesis; selenocysteinyl-tRNA(Sec) biosynthesis; L-seryl-tRNA(Sec) from L-serine and tRNA(Sec): step 1/1. Catalyzes the attachment of serine to tRNA(Ser). Is also able to aminoacylate tRNA(Sec) with serine, to form the misacylated tRNA L-seryl-tRNA(Sec), which will be further converted into selenocysteinyl-tRNA(Sec). The chain is Serine--tRNA ligase from Mycobacterium ulcerans (strain Agy99).